The following is a 127-amino-acid chain: Phosphoribosyl-AMP cyclohydrolase (127 aa).

Asp96 provides a ligand contact to Mg(2+). Residue Cys97 participates in Zn(2+) binding. Mg(2+) is bound by residues Asp98 and Asp100. Residues Cys113 and Cys120 each contribute to the Zn(2+) site.

Belongs to the PRA-CH family. As to quaternary structure, homodimer. Mg(2+) serves as cofactor. Zn(2+) is required as a cofactor.

Its subcellular location is the cytoplasm. It catalyses the reaction 1-(5-phospho-beta-D-ribosyl)-5'-AMP + H2O = 1-(5-phospho-beta-D-ribosyl)-5-[(5-phospho-beta-D-ribosylamino)methylideneamino]imidazole-4-carboxamide. It functions in the pathway amino-acid biosynthesis; L-histidine biosynthesis; L-histidine from 5-phospho-alpha-D-ribose 1-diphosphate: step 3/9. Functionally, catalyzes the hydrolysis of the adenine ring of phosphoribosyl-AMP. In Corynebacterium jeikeium (strain K411), this protein is Phosphoribosyl-AMP cyclohydrolase.